Here is a 602-residue protein sequence, read N- to C-terminus: Glutamyl-tRNA(Gln) amidotransferase subunit B, mitochondrial (602 aa).

Belongs to the GatB/GatE family. GatB subfamily. As to quaternary structure, subunit of the heterotrimeric GatCAB amidotransferase (AdT) complex, composed of A, B and C subunits.

It is found in the mitochondrion. It catalyses the reaction L-glutamyl-tRNA(Gln) + L-glutamine + ATP + H2O = L-glutaminyl-tRNA(Gln) + L-glutamate + ADP + phosphate + H(+). In terms of biological role, allows the formation of correctly charged Gln-tRNA(Gln) through the transamidation of misacylated Glu-tRNA(Gln) in the mitochondria. The reaction takes place in the presence of glutamine and ATP through an activated gamma-phospho-Glu-tRNA(Gln). The polypeptide is Glutamyl-tRNA(Gln) amidotransferase subunit B, mitochondrial (Paracoccidioides lutzii (strain ATCC MYA-826 / Pb01) (Paracoccidioides brasiliensis)).